We begin with the raw amino-acid sequence, 259 residues long: Hydroxyacylglutathione hydrolase (259 aa).

Zn(2+) is bound by residues His-56, His-58, Asp-60, His-61, His-112, Asp-133, and His-171. The span at 224–238 (RTRETSVKEKADERS) shows a compositional bias: basic and acidic residues. Residues 224 to 245 (RTRETSVKEKADERSSGQNTSQ) are disordered.

This sequence belongs to the metallo-beta-lactamase superfamily. Glyoxalase II family. In terms of assembly, monomer. Zn(2+) is required as a cofactor.

The catalysed reaction is an S-(2-hydroxyacyl)glutathione + H2O = a 2-hydroxy carboxylate + glutathione + H(+). It functions in the pathway secondary metabolite metabolism; methylglyoxal degradation; (R)-lactate from methylglyoxal: step 2/2. Functionally, thiolesterase that catalyzes the hydrolysis of S-D-lactoyl-glutathione to form glutathione and D-lactic acid. This Pseudomonas savastanoi pv. phaseolicola (strain 1448A / Race 6) (Pseudomonas syringae pv. phaseolicola (strain 1448A / Race 6)) protein is Hydroxyacylglutathione hydrolase.